Reading from the N-terminus, the 117-residue chain is 16 kDa protein (117 aa).

The chain is 16 kDa protein from Tobacco rattle virus (strain PLB).